The chain runs to 261 residues: tRNA pseudouridine synthase A (261 aa).

The active-site Nucleophile is the Asp51. Tyr109 lines the substrate pocket.

The protein belongs to the tRNA pseudouridine synthase TruA family. As to quaternary structure, homodimer.

The enzyme catalyses uridine(38/39/40) in tRNA = pseudouridine(38/39/40) in tRNA. Functionally, formation of pseudouridine at positions 38, 39 and 40 in the anticodon stem and loop of transfer RNAs. This Shewanella sediminis (strain HAW-EB3) protein is tRNA pseudouridine synthase A.